The sequence spans 131 residues: Fluoride-specific ion channel FluC 1 (131 aa).

4 consecutive transmembrane segments (helical) span residues 4 to 24 (LALPAWQASLVAIGAVPGAWL), 40 to 60 (HWGTFAVNMVAAFALGLVLAL), 73 to 93 (LILLIGVGFFGSLSTFSTFAV), and 108 to 128 (LVLAVGSILGGLLAVAAGVGL). G83 and S86 together coordinate Na(+).

It belongs to the fluoride channel Fluc/FEX (TC 1.A.43) family.

Its subcellular location is the cell inner membrane. It catalyses the reaction fluoride(in) = fluoride(out). With respect to regulation, na(+) is not transported, but it plays an essential structural role and its presence is essential for fluoride channel function. In terms of biological role, fluoride-specific ion channel. Important for reducing fluoride concentration in the cell, thus reducing its toxicity. The sequence is that of Fluoride-specific ion channel FluC 1 from Prochlorococcus marinus (strain MIT 9313).